The chain runs to 380 residues: Chaperone protein DnaJ (380 aa).

One can recognise a J domain in the interval 5–69; the sequence is DLYKVLGVEK…QKRAQYDQFG (65 aa). A CR-type zinc finger spans residues 140–222; that stretch reads GKKTTITYNR…CGGSGHTEQS (83 aa). 8 residues coordinate Zn(2+): cysteine 153, cysteine 156, cysteine 170, cysteine 173, cysteine 196, cysteine 199, cysteine 210, and cysteine 213. CXXCXGXG motif repeat units follow at residues 153-160, 170-177, 196-203, and 210-217; these read CETCGGSG, CSKCHGAG, CDVCHGTG, and CATCGGSG.

Belongs to the DnaJ family. As to quaternary structure, homodimer. It depends on Zn(2+) as a cofactor.

It localises to the cytoplasm. Participates actively in the response to hyperosmotic and heat shock by preventing the aggregation of stress-denatured proteins and by disaggregating proteins, also in an autonomous, DnaK-independent fashion. Unfolded proteins bind initially to DnaJ; upon interaction with the DnaJ-bound protein, DnaK hydrolyzes its bound ATP, resulting in the formation of a stable complex. GrpE releases ADP from DnaK; ATP binding to DnaK triggers the release of the substrate protein, thus completing the reaction cycle. Several rounds of ATP-dependent interactions between DnaJ, DnaK and GrpE are required for fully efficient folding. Also involved, together with DnaK and GrpE, in the DNA replication of plasmids through activation of initiation proteins. This Lactiplantibacillus plantarum (strain ATCC BAA-793 / NCIMB 8826 / WCFS1) (Lactobacillus plantarum) protein is Chaperone protein DnaJ.